We begin with the raw amino-acid sequence, 976 residues long: Vacuolar membrane protease (976 aa).

The Cytoplasmic segment spans residues 1-15; it reads MKLKSVFRSVLKYRK. A helical membrane pass occupies residues 16–36; sequence TNLSLLLLITYSIITLLYIFD. The Vacuolar portion of the chain corresponds to 37-359; sequence HERYKLNLPK…KFFVISAKTL (323 aa). 2 N-linked (GlcNAc...) asparagine glycosylation sites follow: asparagine 96 and asparagine 121. Positions 156 and 168 each coordinate Zn(2+). Asparagine 189 carries an N-linked (GlcNAc...) asparagine glycan. Residue glutamate 200 is the Proton acceptor of the active site. Glutamate 201 contributes to the Zn(2+) binding site. 2 N-linked (GlcNAc...) asparagine glycosylation sites follow: asparagine 212 and asparagine 217. Zn(2+) is bound by residues glutamate 226 and histidine 300. The helical transmembrane segment at 360-380 threads the bilayer; it reads FYWNCIFLLVSPVVAIGLYLI. Residues 381-392 are Cytoplasmic-facing; that stretch reads SRDRMTWKSHSW. A helical transmembrane segment spans residues 393–412; that stretch reads LSWTRFPLSLAAGIIVQKLF. Topologically, residues 413-428 are vacuolar; it reads SNDIIRSNPLTFSRNY. A helical transmembrane segment spans residues 429-449; that stretch reads FWPISAFFTQVIFTSYVLINC. Topologically, residues 450 to 461 are cytoplasmic; the sequence is SNFFFPCADMKS. A helical transmembrane segment spans residues 462-482; that stretch reads LSIIELFIILWTILLFTSKLL. The Vacuolar segment spans residues 483–496; the sequence is YSSDYRYTGLYPLS. The chain crosses the membrane as a helical span at residues 497–517; the sequence is IFFLLSTIAAILRLLALALGM. The Cytoplasmic portion of the chain corresponds to 518 to 627; that stretch reads RTRKRLGREC…NSLKLEYTDY (110 aa). The segment at 528-610 is disordered; that stretch reads RDHHSNYSSH…PLLKGSNSME (83 aa). Positions 549–558 are enriched in polar residues; that stretch reads NLEQPQDQFT. Positions 559 to 570 are enriched in low complexity; that stretch reads SSQDDQASIQDD. A compositionally biased stretch (basic and acidic residues) spans 582-601; sequence NVDEDHGMDSSSQQHDERVP. A helical membrane pass occupies residues 628 to 648; the sequence is AWIIQFLLIVPIPSFILFNSV. Residues 649 to 668 are Vacuolar-facing; sequence DVIMDALNHTVQEGSKATFD. N-linked (GlcNAc...) asparagine glycosylation is present at asparagine 656. Residues 669–689 traverse the membrane as a helical segment; it reads VLRFGMVGSILMALPILPFFY. The Cytoplasmic portion of the chain corresponds to 690-692; sequence KVN. Residues 693-713 traverse the membrane as a helical segment; sequence YITISLTALLFLISASKTLLV. Residues 714–976 are Vacuolar-facing; the sequence is HPFTNSNPLK…LVIVKDAIIL (263 aa). N-linked (GlcNAc...) asparagine glycosylation is found at asparagine 768, asparagine 796, asparagine 811, asparagine 866, and asparagine 937.

The protein belongs to the peptidase M28 family. Zn(2+) is required as a cofactor.

It is found in the vacuole membrane. May be involved in vacuolar sorting and osmoregulation. This chain is Vacuolar membrane protease, found in Saccharomyces cerevisiae (strain Lalvin EC1118 / Prise de mousse) (Baker's yeast).